We begin with the raw amino-acid sequence, 350 residues long: Alcohol dehydrogenase 1 (350 aa).

Residues Cys-44, Thr-46, His-67, Cys-98, Cys-101, Cys-104, Cys-112, and Cys-154 each contribute to the Zn(2+) site. 2 residues coordinate an alcohol: Thr-46 and His-67. Thr-46 lines the NAD(+) pocket. NAD(+) contacts are provided by residues 178–182 (GAGGG), Asp-202, Lys-207, 271–273 (IGL), and Arg-343.

Belongs to the zinc-containing alcohol dehydrogenase family. In terms of assembly, homotetramer. Zn(2+) is required as a cofactor.

The protein localises to the cytoplasm. The protein resides in the secreted. The catalysed reaction is a primary alcohol + NAD(+) = an aldehyde + NADH + H(+). It carries out the reaction a secondary alcohol + NAD(+) = a ketone + NADH + H(+). In Emericella nidulans (strain FGSC A4 / ATCC 38163 / CBS 112.46 / NRRL 194 / M139) (Aspergillus nidulans), this protein is Alcohol dehydrogenase 1 (alcA).